The primary structure comprises 203 residues: Small ribosomal subunit protein uS4 (203 aa).

An S4 RNA-binding domain is found at 93–158 (LRLDNVVYRL…QQLVTRFLDL (66 aa)).

Belongs to the universal ribosomal protein uS4 family. Part of the 30S ribosomal subunit. Contacts protein S5. The interaction surface between S4 and S5 is involved in control of translational fidelity.

Its function is as follows. One of the primary rRNA binding proteins, it binds directly to 16S rRNA where it nucleates assembly of the body of the 30S subunit. In terms of biological role, with S5 and S12 plays an important role in translational accuracy. The sequence is that of Small ribosomal subunit protein uS4 from Akkermansia muciniphila (strain ATCC BAA-835 / DSM 22959 / JCM 33894 / BCRC 81048 / CCUG 64013 / CIP 107961 / Muc).